We begin with the raw amino-acid sequence, 849 residues long: Ribosome biogenesis protein ERB1 (849 aa).

Residues 1-130 (MARNSIKKSP…PKDDDLSRIN (130 aa)) form a disordered region. Composition is skewed to acidic residues over residues 29 to 44 (EAEE…DELN) and 51 to 123 (ASDD…EPKD). Residues 286 to 405 (RFVPSKHEAK…LRQVPGYQDS (120 aa)) form a required for interaction with NOP7 region. Positions 405-441 (SVRERFERSLDLYLAPRVRHNKLNIDPDSLIPDLPSP) are required for interaction with YTM1. WD repeat units lie at residues 457–496 (GHTG…QVYK) and 505–545 (NNED…FDIE). The segment covering 569-581 (KISSQKEEDNKES) has biased composition (basic and acidic residues). Residues 569-619 (KISSQKEEDNKESDNEDEDEEEDNDDDDDDDEPETSSTVEPKKEVAKWYPP) are disordered. Positions 582-602 (DNEDEDEEEDNDDDDDDDEPE) are enriched in acidic residues. 5 WD repeats span residues 633–675 (QCRK…SQSP), 678–716 (KSKG…LLKK), 719–758 (PGVR…TPYK), 762–802 (YHEK…DLMT), and 818–849 (INQI…LWTT).

This sequence belongs to the WD repeat BOP1/ERB1 family. Component of the NOP7 complex, composed of ERB1, NOP7 and YTM1. The complex is held together by ERB1, which interacts with NOP7 via its N-terminal domain and with YTM1 via a high-affinity interaction between the seven-bladed beta-propeller domains of the 2 proteins. The NOP7 complex associates with the 66S pre-ribosome.

It is found in the nucleus. Its subcellular location is the nucleolus. It localises to the nucleoplasm. Functionally, component of the NOP7 complex, which is required for maturation of the 25S and 5.8S ribosomal RNAs and formation of the 60S ribosome. The chain is Ribosome biogenesis protein ERB1 from Candida albicans (strain SC5314 / ATCC MYA-2876) (Yeast).